A 279-amino-acid polypeptide reads, in one-letter code: Non-structural maintenance of chromosomes element 3 homolog (279 aa).

A disordered region spans residues 1 to 52; sequence MLQKPRGRGRPSTQADPERDWGGAGEEGPSTSRAAGGSSQGSRASLSAPTVG. Residues 30-48 show a composition bias toward low complexity; sequence STSRAAGGSSQGSRASLSA. S38 bears the Phosphoserine mark. The segment at 52–279 is interaction with NSMCE1; sequence GPRTQKQLEL…ATASAPATSS (228 aa). Residues 59 to 259 form the MAGE domain; the sequence is LELKVAELVQ…KDWPTQYCEA (201 aa).

As to quaternary structure, component of the SMC5-SMC6 complex which consists at least of SMC5, SMC6, NSMCE2, NSMCE1, NSMCE4A or EID3 and NSMCE3. NSMCE1, NSMCE4A or EID3 and NSMCE3 probably form a subcomplex that bridges the head domains of the SMC5:SMC6 heterodimer. Interacts with PJA1. Interacts with E2F1 (via C-terminus). Interacts with NGFR (via C-terminus). Interacts with NSMCE1. Interacts with NSMCE4. Interacts with SMC6. Interacts with EID3. Ubiquitous.

The protein resides in the cytoplasm. It localises to the nucleus. Its subcellular location is the chromosome. It is found in the telomere. In terms of biological role, component of the SMC5-SMC6 complex, a complex involved in repair of DNA double-strand breaks by homologous recombination. The complex may promote sister chromatid homologous recombination by recruiting the SMC1-SMC3 cohesin complex to double-strand breaks. The complex is required for telomere maintenance via recombination in ALT (alternative lengthening of telomeres) cell lines and mediates sumoylation of shelterin complex (telosome) components which is proposed to lead to shelterin complex disassembly in ALT-associated PML bodies (APBs). In vitro enhances ubiquitin ligase activity of NSMCE1. Proposed to act through recruitment and/or stabilization of the Ubl-conjugating enzyme (E2) at the E3:substrate complex. May be a growth suppressor that facilitates the entry of the cell into cell cycle arrest. In Mus musculus (Mouse), this protein is Non-structural maintenance of chromosomes element 3 homolog (Nsmce3).